Reading from the N-terminus, the 210-residue chain is Na(+)-translocating NADH-quinone reductase subunit D (210 aa).

A run of 5 helical transmembrane segments spans residues 42 to 62, 72 to 92, 103 to 123, 131 to 151, and 178 to 198; these read FVMTLAVTFVTALSNFSVSLI, IIVQMAIIASLVIVVDQVLKA, VFVGLIITNCIVMGRAEAFAM, LIDGIGNGLGYGFVLITVGFF, and NGLMLLAPSAFFLIGFLIWVI.

It belongs to the NqrDE/RnfAE family. As to quaternary structure, composed of six subunits; NqrA, NqrB, NqrC, NqrD, NqrE and NqrF.

The protein localises to the cell inner membrane. The enzyme catalyses a ubiquinone + n Na(+)(in) + NADH + H(+) = a ubiquinol + n Na(+)(out) + NAD(+). Functionally, NQR complex catalyzes the reduction of ubiquinone-1 to ubiquinol by two successive reactions, coupled with the transport of Na(+) ions from the cytoplasm to the periplasm. NqrA to NqrE are probably involved in the second step, the conversion of ubisemiquinone to ubiquinol. This is Na(+)-translocating NADH-quinone reductase subunit D from Vibrio campbellii (strain ATCC BAA-1116).